The following is a 315-amino-acid chain: Ribose-phosphate pyrophosphokinase (315 aa).

Residues 37–39 (DGE) and 96–97 (RQ) contribute to the ATP site. Positions 131 and 170 each coordinate Mg(2+). Residue K194 is part of the active site. D-ribose 5-phosphate contacts are provided by residues R196, D220, and 224–228 (DTGGT).

This sequence belongs to the ribose-phosphate pyrophosphokinase family. Class I subfamily. In terms of assembly, homohexamer. It depends on Mg(2+) as a cofactor.

It is found in the cytoplasm. The catalysed reaction is D-ribose 5-phosphate + ATP = 5-phospho-alpha-D-ribose 1-diphosphate + AMP + H(+). It functions in the pathway metabolic intermediate biosynthesis; 5-phospho-alpha-D-ribose 1-diphosphate biosynthesis; 5-phospho-alpha-D-ribose 1-diphosphate from D-ribose 5-phosphate (route I): step 1/1. Its function is as follows. Involved in the biosynthesis of the central metabolite phospho-alpha-D-ribosyl-1-pyrophosphate (PRPP) via the transfer of pyrophosphoryl group from ATP to 1-hydroxyl of ribose-5-phosphate (Rib-5-P). The protein is Ribose-phosphate pyrophosphokinase of Salmonella typhi.